An 84-amino-acid polypeptide reads, in one-letter code: Translational regulator CsrA (84 aa).

The protein belongs to the CsrA/RsmA family. In terms of assembly, homodimer; the beta-strands of each monomer intercalate to form a hydrophobic core, while the alpha-helices form wings that extend away from the core.

The protein resides in the cytoplasm. A translational regulator that binds mRNA to regulate translation initiation and/or mRNA stability. Usually binds in the 5'-UTR at or near the Shine-Dalgarno sequence preventing ribosome-binding, thus repressing translation. Its main target seems to be the major flagellin gene, while its function is anatagonized by FliW. The polypeptide is Translational regulator CsrA (Leptospira interrogans serogroup Icterohaemorrhagiae serovar Lai (strain 56601)).